The following is a 533-amino-acid chain: DnaJ homolog subfamily C member 21 (533 aa).

The J domain maps to 3–70 (CHYEALGVRR…ERAWYDNHRE (68 aa)). Disordered regions lie at residues 278-311 (QFGD…AELY), 327-473 (KAMR…RVPA), and 503-533 (KATG…RKNR). A phosphoserine mark is found at Ser-283 and Ser-302. Basic and acidic residues predominate over residues 291–302 (QELRDGQDGKDS). A C2H2-type 1 zinc finger spans residues 315 to 339 (YCPACDKSFKTEKAMRNHEKSKKHR). Residues 357–369 (SGPQTDENSLNAN) show a composition bias toward polar residues. Ser-370 bears the Phosphoserine mark. Over residues 381–392 (KLSRKQKKKKQK) the composition is skewed to basic residues. Over residues 393-403 (PAQNYDDNFNE) the composition is skewed to polar residues. The span at 455-464 (SKPKGKKAKD) shows a compositional bias: basic residues. The segment at 484-508 (SCTTCHSEFPSRNKLFDHLKATGHA) adopts a C2H2-type 2 zinc-finger fold. Position 512 is a phosphoserine (Ser-512). Residues 512–523 (SSSTSLNSVTNS) are compositionally biased toward low complexity. Basic residues predominate over residues 524 to 533 (RNKKEKRKNR).

In terms of assembly, interacts with HSPA8, PA2G4 and ZNF622.

Its subcellular location is the cytoplasm. It is found in the nucleus. The protein resides in the nucleolus. Functionally, may act as a co-chaperone for HSP70. May play a role in ribosomal RNA (rRNA) biogenesis, possibly in the maturation of the 60S subunit. Binds the precursor 45S rRNA. This chain is DnaJ homolog subfamily C member 21 (DNAJC21), found in Bos taurus (Bovine).